The chain runs to 541 residues: Arginine--tRNA ligase (541 aa).

The 'HIGH' region signature appears at 119–129 (ANPTGPLHIGH).

This sequence belongs to the class-I aminoacyl-tRNA synthetase family. In terms of assembly, monomer.

It localises to the cytoplasm. It catalyses the reaction tRNA(Arg) + L-arginine + ATP = L-arginyl-tRNA(Arg) + AMP + diphosphate. The protein is Arginine--tRNA ligase of Helicobacter pylori (strain HPAG1).